A 203-amino-acid polypeptide reads, in one-letter code: Glycerol-3-phosphate acyltransferase (203 aa).

Transmembrane regions (helical) follow at residues 5–25 (IASIALVLLAYLSGSIPFSLL), 50–70 (TCGFSAFALAMGGDMLKGALP), 72–92 (IAAQALGLSPLAVVIVGTAAM), 115–135 (VVLTLAPLVALPGLAAWAVTF), 140–160 (ISAVASLTAAAVCGIAAAVLL), and 162–182 (LGMLPPAYAIFVWGAVAAIVF).

The protein belongs to the PlsY family. As to quaternary structure, probably interacts with PlsX.

The protein localises to the cell membrane. It carries out the reaction an acyl phosphate + sn-glycerol 3-phosphate = a 1-acyl-sn-glycero-3-phosphate + phosphate. It functions in the pathway lipid metabolism; phospholipid metabolism. Functionally, catalyzes the transfer of an acyl group from acyl-phosphate (acyl-PO(4)) to glycerol-3-phosphate (G3P) to form lysophosphatidic acid (LPA). This enzyme utilizes acyl-phosphate as fatty acyl donor, but not acyl-CoA or acyl-ACP. This Roseiflexus sp. (strain RS-1) protein is Glycerol-3-phosphate acyltransferase.